Consider the following 438-residue polypeptide: UDP-N-acetylmuramoylalanine--D-glutamate ligase (438 aa).

112 to 118 is a binding site for ATP; sequence GSNGKST.

This sequence belongs to the MurCDEF family.

The protein resides in the cytoplasm. It catalyses the reaction UDP-N-acetyl-alpha-D-muramoyl-L-alanine + D-glutamate + ATP = UDP-N-acetyl-alpha-D-muramoyl-L-alanyl-D-glutamate + ADP + phosphate + H(+). It functions in the pathway cell wall biogenesis; peptidoglycan biosynthesis. Functionally, cell wall formation. Catalyzes the addition of glutamate to the nucleotide precursor UDP-N-acetylmuramoyl-L-alanine (UMA). In Yersinia pestis bv. Antiqua (strain Antiqua), this protein is UDP-N-acetylmuramoylalanine--D-glutamate ligase.